We begin with the raw amino-acid sequence, 931 residues long: Isoleucine--tRNA ligase (931 aa).

Positions Pro57–His67 match the 'HIGH' region motif. Position 556 (Glu556) interacts with L-isoleucyl-5'-AMP. The 'KMSKS' region motif lies at Lys597–Ser601. Lys600 lines the ATP pocket. Cys890, Cys893, Cys910, and Cys913 together coordinate Zn(2+).

Belongs to the class-I aminoacyl-tRNA synthetase family. IleS type 1 subfamily. As to quaternary structure, monomer. It depends on Zn(2+) as a cofactor.

Its subcellular location is the cytoplasm. The enzyme catalyses tRNA(Ile) + L-isoleucine + ATP = L-isoleucyl-tRNA(Ile) + AMP + diphosphate. Its function is as follows. Catalyzes the attachment of isoleucine to tRNA(Ile). As IleRS can inadvertently accommodate and process structurally similar amino acids such as valine, to avoid such errors it has two additional distinct tRNA(Ile)-dependent editing activities. One activity is designated as 'pretransfer' editing and involves the hydrolysis of activated Val-AMP. The other activity is designated 'posttransfer' editing and involves deacylation of mischarged Val-tRNA(Ile). This chain is Isoleucine--tRNA ligase, found in Lactobacillus delbrueckii subsp. bulgaricus (strain ATCC 11842 / DSM 20081 / BCRC 10696 / JCM 1002 / NBRC 13953 / NCIMB 11778 / NCTC 12712 / WDCM 00102 / Lb 14).